A 702-amino-acid chain; its full sequence is SAGA complex subunit NGG1 (702 aa).

A compositionally biased stretch (basic residues) spans 1 to 10 (MPRHGRRGKL). 2 disordered regions span residues 1 to 29 (MPRHGRRGKLPKGEKLPKKEGGDNTPSKL) and 90 to 224 (LRKI…VKNP). Composition is skewed to basic and acidic residues over residues 11–22 (PKGEKLPKKEGG) and 90–108 (LRKIRDSKNEKQANDEKQE). Over residues 109–125 (TSNADGQHESSTATEET) the composition is skewed to polar residues. Position 134 is a phosphoserine (S134). Positions 162-219 (MAKEEINEDKDLQVHRDQPREKRPFDSETENRATENENTQRPDNKKQKIDVDKMENDP) are enriched in basic and acidic residues. S407 carries the post-translational modification Phosphoserine. T464 is subject to Phosphothreonine. The Nuclear localization signal motif lies at 606-618 (KRIRVPKKRKKHH). Disordered regions lie at residues 611-636 (PKKRKKHHTAASNNVNTGTTSQIAQQ) and 672-702 (NESVFKDMDQEEDEDEADVFAQNTNKDVELN). Residues 620 to 636 (AASNNVNTGTTSQIAQQ) show a composition bias toward polar residues. The segment covering 680-689 (DQEEDEDEAD) has biased composition (acidic residues).

The protein belongs to the NGG1 family. As to quaternary structure, component of the 1.8 MDa SAGA (Spt-Ada-Gcn5 acetyltransferase) complex, which is composed of 19 subunits TRA1, SPT7, TAF5, NGG1/ADA3, SGF73, SPT20/ADA5, SPT8, TAF12, TAF6, HFI1/ADA1, UBP8, GCN5, ADA2, SPT3, SGF29, TAF10, TAF9, SGF11 and SUS1. The SAGA complex is composed of 4 modules, namely the HAT (histone acetyltransferase) module (GCN5, ADA2, NGG1/ADA3 and SGF29), the DUB (deubiquitinating) module (UBP8, SGF11, SGF73 and SUS1), the core or TAF (TBP-associated factor) module (TAF5, TAF6, TAF9, TAF10 and TAF12), and the Tra1 or SPT (Suppressor of Ty) module (TRA1, HFI1/ADA1, SPT3, SPT7, SPT8 and SPT20/ADA5). The Tra1/SPT module binds activators, the core module recruits TBP (TATA-binding protein), the HAT module contains the histone H3 acetyltransferase GCN5, and the DUB module comprises the histone H2B deubiquitinase UBP8. Also identified in an altered form of SAGA, named SALSA (SAGA altered, Spt8 absent) or SLIK (SAGA-like) complex, which contains a C-terminal truncated form of SPT7 and is missing SPT8. However, it has been shown that the SAGA and SAGA-like SALSA/SLIK transcriptional coactivators are structurally and biochemically equivalent. Component of the 0.8 MDa ADA complex, a HAT complex distinct from SAGA, which at least consists of ADA2, NGG1/ADA3, AHC1, AHC2, SGF29 and GCN5. Identified in an Ada.spt complex with SPT7 and TRA1. Component of an ADA/GCN5 complex that consists of HFI1/ADA1, ADA2, NGG1/ADA3, SPT20/ADA5 and GCN5 and probably is a subcomplex of SAGA.

The protein resides in the nucleus. Functionally, component of the transcription coactivator SAGA complex. SAGA acts as a general cofactor required for essentially all RNA polymerase II transcription. At the promoters, SAGA is required for transcription pre-initiation complex (PIC) recruitment. It influences RNA polymerase II transcriptional activity through different activities such as TBP interaction (via core/TAF module) and promoter selectivity, interaction with transcription activators (via Tra1/SPT module), and chromatin modification through histone acetylation (via HAT module) and deubiquitination (via DUB module). SAGA preferentially acetylates histones H3 (to form H3K9ac, H3K14ac, H3K18ac and H3K23ac) and H2B and deubiquitinates histone H2B. SAGA interacts with DNA via upstream activating sequences (UASs). Also identified in a modified version of SAGA named SALSA or SLIK. The cleavage of SPT7 and the absence of the SPT8 subunit in SLIK neither drive any major conformational differences in its structure compared with SAGA, nor significantly affect HAT, DUB, or DNA-binding activities. Component of the ADA histone acetyltransferase complex, which preferentially acetylates nucleosomal histones H3 (to form H3K14ac and H3K18ac) and H2B. May be involved in response to DNA damage by genotoxic agents. The protein is SAGA complex subunit NGG1 (NGG1) of Saccharomyces cerevisiae (strain ATCC 204508 / S288c) (Baker's yeast).